The primary structure comprises 235 residues: tRNA1(Val) (adenine(37)-N6)-methyltransferase (235 aa).

This sequence belongs to the methyltransferase superfamily. tRNA (adenine-N(6)-)-methyltransferase family.

It is found in the cytoplasm. The enzyme catalyses adenosine(37) in tRNA1(Val) + S-adenosyl-L-methionine = N(6)-methyladenosine(37) in tRNA1(Val) + S-adenosyl-L-homocysteine + H(+). Functionally, specifically methylates the adenine in position 37 of tRNA(1)(Val) (anticodon cmo5UAC). This chain is tRNA1(Val) (adenine(37)-N6)-methyltransferase, found in Flavobacterium johnsoniae (strain ATCC 17061 / DSM 2064 / JCM 8514 / BCRC 14874 / CCUG 350202 / NBRC 14942 / NCIMB 11054 / UW101) (Cytophaga johnsonae).